Consider the following 483-residue polypeptide: Glutamate--tRNA ligase (483 aa).

A 'HIGH' region motif is present at residues 11–21 (PSPTGHLHIGN). 4 residues coordinate Zn(2+): Cys-108, Cys-110, His-135, and Asp-137. The 'KMSKS' region signature appears at 252–256 (KLSKR). Lys-255 lines the ATP pocket.

The protein belongs to the class-I aminoacyl-tRNA synthetase family. Glutamate--tRNA ligase type 1 subfamily. Monomer. The cofactor is Zn(2+).

The protein localises to the cytoplasm. It catalyses the reaction tRNA(Glu) + L-glutamate + ATP = L-glutamyl-tRNA(Glu) + AMP + diphosphate. Catalyzes the attachment of glutamate to tRNA(Glu) in a two-step reaction: glutamate is first activated by ATP to form Glu-AMP and then transferred to the acceptor end of tRNA(Glu). This Bacillus subtilis (strain 168) protein is Glutamate--tRNA ligase.